Consider the following 635-residue polypeptide: Sodium- and chloride-dependent creatine transporter 1 (635 aa).

Positions 1–27 (MAKKSAENGIYSVSGDEKKGPLIVSGP) are disordered. Residues 1–60 (MAKKSAENGIYSVSGDEKKGPLIVSGPDGAPAKGDGPAGLGAPGGRLAVPPRETWTRQMD) are Cytoplasmic-facing. A helical membrane pass occupies residues 61–81 (FIMSCVGFAVGLGNVWRFPYL). The Extracellular segment spans residues 82 to 87 (CYKNGG). A helical membrane pass occupies residues 88–108 (GVFLIPYVLIALVGGIPIFFL). Topologically, residues 109-138 (EISLGQFMKAGSINVWNICPLFKGLGYASM) are cytoplasmic. A helical membrane pass occupies residues 139–159 (VIVFYCNTYYIMVLAWGFYYL). Residues 160–230 (VKSFTTTLPW…LSTGLEVPGA (71 aa)) lie on the Extracellular side of the membrane. Residues N192 and N197 are each glycosylated (N-linked (GlcNAc...) asparagine). A helical membrane pass occupies residues 231 to 251 (LNWEVTLCLLACWVLVYFCVW). Over 252–269 (KGVKSTGKIVYFTATFPY) the chain is Cytoplasmic. The helical transmembrane segment at 270–290 (VVLVVLLVRGVLLPGALDGII) threads the bilayer. The Extracellular segment spans residues 291-304 (YYLKPDWSKLGSPQ). Residues 305-325 (VWIDAGTQIFFSYAIGLGALT) traverse the membrane as a helical segment. Topologically, residues 326-341 (ALGSYNRFNNNCYKDA) are cytoplasmic. Residues 342-362 (IILALINSGTSFFAGFVVFSI) traverse the membrane as a helical segment. Residues 363-394 (LGFMATEQGVHISKVAESGPGLAFIAYPRAVT) lie on the Extracellular side of the membrane. Residues 395–415 (LMPVAPLWAALFFFMLLLLGL) traverse the membrane as a helical segment. Topologically, residues 416 to 444 (DSQFVGVEGFITGLLDLLPASYYFRFQRE) are cytoplasmic. Residues 445 to 465 (ISVALCCALCFVIDLSMVTDG) form a helical membrane-spanning segment. The Extracellular segment spans residues 466-479 (GMYVFQLFDYYSAS). A helical membrane pass occupies residues 480–500 (GTTLLWQAFWECVVVAWVYGA). Over 501 to 520 (DRFMDDIACMIGYRPCPWMK) the chain is Cytoplasmic. A helical transmembrane segment spans residues 521–541 (WCWSFFTPLVCMGIFIFNIVY). Residues 542-560 (YEPLVYNNTYVYPWWGEAM) are Extracellular-facing. N-linked (GlcNAc...) asparagine glycosylation occurs at N548. A helical transmembrane segment spans residues 561–581 (GWAFALSSMLCVPLHLLGCLL). Over 582 to 635 (RAKGTMAERWQHLTQPIWGLHHLEYRAQDADVRGLTTLTPVSESSKVVVVESVM) the chain is Cytoplasmic. A phosphothreonine mark is found at T617 and T620. S623 is subject to Phosphoserine.

Belongs to the sodium:neurotransmitter symporter (SNF) (TC 2.A.22) family. SLC6A8 subfamily. Glycosylated. As to expression, brain. Highly expressed in brain capillaries branching in all cortical layers and moderately expressed in neuronal perikarya (at protein level).

The protein localises to the cell membrane. It localises to the apical cell membrane. The catalysed reaction is creatine(out) + chloride(out) + 2 Na(+)(out) = creatine(in) + chloride(in) + 2 Na(+)(in). Its function is as follows. Creatine:sodium symporter which mediates the uptake of creatine. Plays an important role in supplying creatine to the brain via the blood-brain barrier. This is Sodium- and chloride-dependent creatine transporter 1 (Slc6a8) from Mus musculus (Mouse).